The primary structure comprises 308 residues: Aspartate carbamoyltransferase catalytic subunit (308 aa).

Residues Arg-57 and Thr-58 each coordinate carbamoyl phosphate. Lys-86 serves as a coordination point for L-aspartate. Residues Arg-107, His-135, and Gln-138 each coordinate carbamoyl phosphate. L-aspartate is bound by residues Arg-167 and Arg-228. Leu-267 and Pro-268 together coordinate carbamoyl phosphate.

It belongs to the aspartate/ornithine carbamoyltransferase superfamily. ATCase family. In terms of assembly, heterooligomer of catalytic and regulatory chains.

The catalysed reaction is carbamoyl phosphate + L-aspartate = N-carbamoyl-L-aspartate + phosphate + H(+). The protein operates within pyrimidine metabolism; UMP biosynthesis via de novo pathway; (S)-dihydroorotate from bicarbonate: step 2/3. In terms of biological role, catalyzes the condensation of carbamoyl phosphate and aspartate to form carbamoyl aspartate and inorganic phosphate, the committed step in the de novo pyrimidine nucleotide biosynthesis pathway. The protein is Aspartate carbamoyltransferase catalytic subunit of Methanosarcina acetivorans (strain ATCC 35395 / DSM 2834 / JCM 12185 / C2A).